The chain runs to 1356 residues: DNA-directed RNA polymerase subunit beta (1356 aa).

This sequence belongs to the RNA polymerase beta chain family. The RNAP catalytic core consists of 2 alpha, 1 beta, 1 beta' and 1 omega subunit. When a sigma factor is associated with the core the holoenzyme is formed, which can initiate transcription.

It carries out the reaction RNA(n) + a ribonucleoside 5'-triphosphate = RNA(n+1) + diphosphate. Functionally, DNA-dependent RNA polymerase catalyzes the transcription of DNA into RNA using the four ribonucleoside triphosphates as substrates. The polypeptide is DNA-directed RNA polymerase subunit beta (Stutzerimonas stutzeri (strain A1501) (Pseudomonas stutzeri)).